Reading from the N-terminus, the 278-residue chain is Ras-related protein rapC (278 aa).

Residue 10 to 17 participates in GTP binding; it reads GASGTGKT. Positions 32-40 match the Effector region motif; the sequence is YDPTIEDLY. GTP is bound by residues 58–62 and 119–122; these read DTSGT and NKCD. Disordered regions lie at residues 176 to 209 and 236 to 278; these read NGSS…SSSS and STSS…CLIM. 2 stretches are compositionally biased toward low complexity: residues 198-209 and 236-251; these read GSNNSSINSSSS and STSS…SQTN. Cys275 carries the post-translational modification Cysteine methyl ester. Cys275 carries the S-geranylgeranyl cysteine lipid modification. Residues 276–278 constitute a propeptide, removed in mature form; it reads LIM.

This sequence belongs to the small GTPase superfamily. Ras family.

Its subcellular location is the cell membrane. The enzyme catalyses GTP + H2O = GDP + phosphate + H(+). This chain is Ras-related protein rapC (rapC), found in Dictyostelium discoideum (Social amoeba).